We begin with the raw amino-acid sequence, 579 residues long: Nuclear receptor subfamily 1 group D member 2 (579 aa).

The segment at 1–60 is required for phosphorylation by CSNK1E and cytoplasmic localization; the sequence is MEVNAGGVIAYISSSSSASSPASCHSEGSENSFQSSSSSVPSSPNSSNSDTNGNPKNGDL. The interval 1 to 99 is modulating; that stretch reads MEVNAGGVIA…HSGVTKFSGM (99 aa). Residues 13–54 are compositionally biased toward low complexity; sequence SSSSSASSPASCHSEGSENSFQSSSSSVPSSPNSSNSDTNGN. The tract at residues 13 to 61 is disordered; sequence SSSSSASSPASCHSEGSENSFQSSSSSVPSSPNSSNSDTNGNPKNGDLA. Ser-46 bears the Phosphoserine; by GSK3-beta mark. Residues 100 to 176 constitute a DNA-binding region (nuclear receptor); that stretch reads VLLCKVCGDV…VGMSRDAVRF (77 aa). NR C4-type zinc fingers lie at residues 103-123 and 140-164; these read CKVC…CEGC and CLKN…FKKC. N6-acetyllysine; by KAT5 occurs at positions 162 and 163. Residues 222-250 form a disordered region; that stretch reads PAQEQLRPKPQLEQENIKSSSPPSSDFAK. Residues 227-237 show a composition bias toward basic and acidic residues; it reads LRPKPQLEQEN. 2 cysteine pairs are disulfide-bonded: Cys-337–Cys-343 and Cys-374–Cys-384. Positions 369–579 constitute an NR LBD domain; sequence KNSYLCNTGG…EELLAFKVHP (211 aa). Heme contacts are provided by Cys-384 and His-568. The tract at residues 397–579 is interaction with ZNHIT1; sequence SGHEIWEEFS…EELLAFKVHP (183 aa).

It belongs to the nuclear hormone receptor family. NR1 subfamily. As to quaternary structure, binds DNA as a monomer or a homodimer. Interacts with NCOA5 coactivator, leading to a strong increase of transcription of target genes. Interacts (via N-terminus) with KAT5. Interacts (via C-terminus) with HDAC1. Interacts with ZNHIT1. Interacts with SIAH2. In terms of processing, deacetylated by HDAC1. Acetylation and deacetylation regulate its transcriptional regulatory activity. Under more reducing intracellular redox conditions, Cys-384 is in its heme-bound state, which is optimal for recruitment of the NCOR1/HDAC3 corepressor complex and repression of target genes. When subjected to oxidative stress conditions, Cys-384 undergoes oxidation to form a disulfide bridge with Cys-374, also triggering a ligand switch that results in release of bound heme and derepression of target genes. Post-translationally, ubiquitinated by SIAH2; leading to proteasomal degradation. In terms of processing, phosphorylated by CSNK1E; phosphorylation enhances its cytoplasmic localization. As to expression, widely expressed. Expressed at high levels in the liver, adipose tissue, skeletal muscle and brain. Expression oscillates diurnally in the suprachiasmatic nucleus (SCN) of the hypothalamus as well as in peripheral tissues.

It localises to the nucleus. The protein resides in the cytoplasm. With respect to regulation, the heme-bound form can bind gaseous signaling molecules such as CO and nitric oxide (NO) and NO can reverse its transcriptional repressor activity. Its function is as follows. Transcriptional repressor which coordinates circadian rhythm and metabolic pathways in a heme-dependent manner. Integral component of the complex transcription machinery that governs circadian rhythmicity and forms a critical negative limb of the circadian clock by directly repressing the expression of core clock components BMAL1 and CLOCK. Also regulates genes involved in metabolic functions, including lipid metabolism and the inflammatory response. Acts as a receptor for heme which stimulates its interaction with the NCOR1/HDAC3 corepressor complex, enhancing transcriptional repression. Recognizes two classes of DNA response elements within the promoter of its target genes and can bind to DNA as either monomers or homodimers, depending on the nature of the response element. Binds as a monomer to a response element composed of the consensus half-site motif 5'-[A/G]GGTCA-3' preceded by an A/T-rich 5' sequence (RevRE), or as a homodimer to a direct repeat of the core motif spaced by two nuclegotides (RevDR-2). Acts as a potent competitive repressor of ROR alpha (RORA) function and also negatively regulates the expression of NR1D1. Regulates lipid and energy homeostasis in the skeletal muscle via repression of genes involved in lipid metabolism and myogenesis including: CD36, FABP3, FABP4, UCP3, SCD1 and MSTN. Regulates hepatic lipid metabolism via the repression of APOC3. Represses gene expression at a distance in macrophages by inhibiting the transcription of enhancer-derived RNAs (eRNAs). In addition to its activity as a repressor, can also act as a transcriptional activator. Acts as a transcriptional activator of the sterol regulatory element-binding protein 1 (SREBF1) and the inflammatory mediator interleukin-6 (IL6) in the skeletal muscle. Plays a role in the regulation of circadian sleep/wake cycle; essential for maintaining wakefulness during the dark phase or active period. Key regulator of skeletal muscle mitochondrial function; negatively regulates the skeletal muscle expression of core clock genes and genes involved in mitochondrial biogenesis, fatty acid beta-oxidation and lipid metabolism. May play a role in the circadian control of neutrophilic inflammation in the lung. The sequence is that of Nuclear receptor subfamily 1 group D member 2 from Homo sapiens (Human).